A 547-amino-acid chain; its full sequence is Glucose-6-phosphate isomerase (547 aa).

The Proton donor role is filled by Glu-354. Residues His-385 and Lys-513 contribute to the active site.

This sequence belongs to the GPI family.

It localises to the cytoplasm. It carries out the reaction alpha-D-glucose 6-phosphate = beta-D-fructose 6-phosphate. Its pathway is carbohydrate biosynthesis; gluconeogenesis. The protein operates within carbohydrate degradation; glycolysis; D-glyceraldehyde 3-phosphate and glycerone phosphate from D-glucose: step 2/4. Its function is as follows. Catalyzes the reversible isomerization of glucose-6-phosphate to fructose-6-phosphate. This Erwinia tasmaniensis (strain DSM 17950 / CFBP 7177 / CIP 109463 / NCPPB 4357 / Et1/99) protein is Glucose-6-phosphate isomerase.